Consider the following 116-residue polypeptide: uncharacterized protein (116 aa).

This is an uncharacterized protein from Methanocaldococcus jannaschii (strain ATCC 43067 / DSM 2661 / JAL-1 / JCM 10045 / NBRC 100440) (Methanococcus jannaschii).